Consider the following 631-residue polypeptide: MATFIFSRGNIFFYVNKITIPDLMSDVLLSKLSTELADLDGEIGQIDQQISQLRRKKSELTQKRQAIERKIELKTNEDSDVVTDRWDRDGFPWSDEATKILKEQFHLEKFRPLQRAAINAVMSKEDAVVILSTGGGKSLCYQLPALLANGLALVVSPLISLVEDQILQLRSLGIDSSSLNANTSKEEAKRVEDAITNKDSKFRLLYVTPEKLAKSKKMMNKLEKSLSVGFLKLIAIDEVHCCSQWGHDFRTDYSFLNVLKRQFKGVPILGLTATATSNVLDDVKDMLGIQAALTFRAGFNRSNLKYKVVQKPGSEDECTEEIAKTIKRDFAGQTGIIYCLSRNDCEKVAKALKSHGIKAKHYHAYMEPVDRSGAHQGWISGKIQVIVATVAFGMGIDKPNVRFVIHHSLPKSIENYYQESGRAGRDGQPATCILYYRLADIFKQSSMVQQERTGIQNLYNMVRYAADSSTCRRVKLAEHFEEAWEPSWCQKQCDTCENGNGFVGTSSKESTDVSEAAKTTVRIIEEHLNSAKDGSGRITGNKLVELLTKKLKGSRNREFCEKLIVNLLLEGYLQEDFHYTVYSVISYVVIGSKWRVYNGKDAIKMRHVEESKSRKRKASSSVEEEDVMVLD.

Positions 118-293 constitute a Helicase ATP-binding domain; it reads INAVMSKEDA…KDMLGIQAAL (176 aa). 131 to 138 contributes to the ATP binding site; that stretch reads LSTGGGKS. Positions 237-240 match the DEVH box motif; sequence DEVH. A Helicase C-terminal domain is found at 318–466; sequence CTEEIAKTIK…NLYNMVRYAA (149 aa). Positions 471, 489, 493, and 496 each coordinate Zn(2+). The segment at 610–631 is disordered; the sequence is ESKSRKRKASSSVEEEDVMVLD. Residues 622–631 show a composition bias toward acidic residues; sequence VEEEDVMVLD.

Belongs to the helicase family. RecQ subfamily. Zn(2+) is required as a cofactor.

It localises to the nucleus. The catalysed reaction is Couples ATP hydrolysis with the unwinding of duplex DNA by translocating in the 3'-5' direction.. It carries out the reaction ATP + H2O = ADP + phosphate + H(+). Functionally, DNA helicase that may play a role in the repair of DNA that is damaged by ultraviolet light or other mutagens. Exhibits a magnesium-dependent ATP-dependent DNA-helicase activity that unwinds single- and double-stranded DNA in a 3'-5' direction. This is Putative ATP-dependent DNA helicase Q1 from Caenorhabditis elegans.